The following is a 190-amino-acid chain: dTTP/UTP pyrophosphatase (190 aa).

Asp-71 (proton acceptor) is an active-site residue.

It belongs to the Maf family. YhdE subfamily. A divalent metal cation is required as a cofactor.

It localises to the cytoplasm. It carries out the reaction dTTP + H2O = dTMP + diphosphate + H(+). It catalyses the reaction UTP + H2O = UMP + diphosphate + H(+). Nucleoside triphosphate pyrophosphatase that hydrolyzes dTTP and UTP. May have a dual role in cell division arrest and in preventing the incorporation of modified nucleotides into cellular nucleic acids. This Xanthomonas campestris pv. campestris (strain ATCC 33913 / DSM 3586 / NCPPB 528 / LMG 568 / P 25) protein is dTTP/UTP pyrophosphatase.